A 398-amino-acid polypeptide reads, in one-letter code: Carbamoyl phosphate synthase small chain (398 aa).

The segment at 1 to 207 (MIQTISSSRP…KGYGTNNVHN (207 aa)) is CPSase. 3 residues coordinate L-glutamine: Ser60, Gly257, and Gly259. Residues 209–397 (HIVAIDYGIK…CDLIMNHKKI (189 aa)) enclose the Glutamine amidotransferase type-1 domain. Residue Cys286 is the Nucleophile of the active site. Residues Leu287, Gln290, Asn328, Gly330, and Phe331 each contribute to the L-glutamine site. Active-site residues include His370 and Glu372.

It belongs to the CarA family. In terms of assembly, composed of two chains; the small (or glutamine) chain promotes the hydrolysis of glutamine to ammonia, which is used by the large (or ammonia) chain to synthesize carbamoyl phosphate. Tetramer of heterodimers (alpha,beta)4.

The catalysed reaction is hydrogencarbonate + L-glutamine + 2 ATP + H2O = carbamoyl phosphate + L-glutamate + 2 ADP + phosphate + 2 H(+). It carries out the reaction L-glutamine + H2O = L-glutamate + NH4(+). It participates in amino-acid biosynthesis; L-arginine biosynthesis; carbamoyl phosphate from bicarbonate: step 1/1. Its pathway is pyrimidine metabolism; UMP biosynthesis via de novo pathway; (S)-dihydroorotate from bicarbonate: step 1/3. Its function is as follows. Small subunit of the glutamine-dependent carbamoyl phosphate synthetase (CPSase). CPSase catalyzes the formation of carbamoyl phosphate from the ammonia moiety of glutamine, carbonate, and phosphate donated by ATP, constituting the first step of 2 biosynthetic pathways, one leading to arginine and/or urea and the other to pyrimidine nucleotides. The small subunit (glutamine amidotransferase) binds and cleaves glutamine to supply the large subunit with the substrate ammonia. In Bartonella tribocorum (strain CIP 105476 / IBS 506), this protein is Carbamoyl phosphate synthase small chain.